The primary structure comprises 279 residues: Biotin synthase (279 aa).

Positions 2 to 228 (KTIMLCAISS…NARIMIAGGR (227 aa)) constitute a Radical SAM core domain. The [4Fe-4S] cluster site is built by cysteine 17, cysteine 21, and cysteine 24. [2Fe-2S] cluster is bound by residues cysteine 61, cysteine 96, cysteine 154, and arginine 221.

This sequence belongs to the radical SAM superfamily. Biotin synthase family. Homodimer. Requires [4Fe-4S] cluster as cofactor. The cofactor is [2Fe-2S] cluster.

It carries out the reaction (4R,5S)-dethiobiotin + (sulfur carrier)-SH + 2 reduced [2Fe-2S]-[ferredoxin] + 2 S-adenosyl-L-methionine = (sulfur carrier)-H + biotin + 2 5'-deoxyadenosine + 2 L-methionine + 2 oxidized [2Fe-2S]-[ferredoxin]. The protein operates within cofactor biosynthesis; biotin biosynthesis; biotin from 7,8-diaminononanoate: step 2/2. In terms of biological role, catalyzes the conversion of dethiobiotin (DTB) to biotin by the insertion of a sulfur atom into dethiobiotin via a radical-based mechanism. This is Biotin synthase from Campylobacter curvus (strain 525.92).